The chain runs to 545 residues: CTP synthase (545 aa).

The interval 1 to 266 (MTHFIFVTGG…DDLICERFGF (266 aa)) is amidoligase domain. Serine 13 contacts CTP. Position 13 (serine 13) interacts with UTP. ATP contacts are provided by residues 14–19 (SLGKGI) and aspartate 71. 2 residues coordinate Mg(2+): aspartate 71 and glutamate 140. CTP is bound by residues 147–149 (DIE), 187–192 (KTKPTQ), and lysine 223. UTP contacts are provided by residues 187 to 192 (KTKPTQ) and lysine 223. ATP is bound at residue 239-241 (KDA). The 252-residue stretch at 292-543 (RVAMVGKYVE…IDAAKTQHQK (252 aa)) folds into the Glutamine amidotransferase type-1 domain. Glycine 353 serves as a coordination point for L-glutamine. Cysteine 380 acts as the Nucleophile; for glutamine hydrolysis in catalysis. Residues 381–384 (LGMQ), glutamate 404, and arginine 471 each bind L-glutamine. Catalysis depends on residues histidine 516 and glutamate 518.

Belongs to the CTP synthase family. Homotetramer.

It catalyses the reaction UTP + L-glutamine + ATP + H2O = CTP + L-glutamate + ADP + phosphate + 2 H(+). The enzyme catalyses L-glutamine + H2O = L-glutamate + NH4(+). It carries out the reaction UTP + NH4(+) + ATP = CTP + ADP + phosphate + 2 H(+). It functions in the pathway pyrimidine metabolism; CTP biosynthesis via de novo pathway; CTP from UDP: step 2/2. Its activity is regulated as follows. Allosterically activated by GTP, when glutamine is the substrate; GTP has no effect on the reaction when ammonia is the substrate. The allosteric effector GTP functions by stabilizing the protein conformation that binds the tetrahedral intermediate(s) formed during glutamine hydrolysis. Inhibited by the product CTP, via allosteric rather than competitive inhibition. Its function is as follows. Catalyzes the ATP-dependent amination of UTP to CTP with either L-glutamine or ammonia as the source of nitrogen. Regulates intracellular CTP levels through interactions with the four ribonucleotide triphosphates. The chain is CTP synthase from Acinetobacter baumannii (strain AB307-0294).